The sequence spans 335 residues: DNA-directed RNA polymerase subunit alpha (335 aa).

Residues 1–233 (MTAVNDFLTP…QQIAVFVDLE (233 aa)) form an alpha N-terminal domain (alpha-NTD) region. Residues 247–335 (IDPILLRPVD…DDDRLNAKLR (89 aa)) form an alpha C-terminal domain (alpha-CTD) region.

It belongs to the RNA polymerase alpha chain family. Homodimer. The RNAP catalytic core consists of 2 alpha, 1 beta, 1 beta' and 1 omega subunit. When a sigma factor is associated with the core the holoenzyme is formed, which can initiate transcription.

The enzyme catalyses RNA(n) + a ribonucleoside 5'-triphosphate = RNA(n+1) + diphosphate. Its function is as follows. DNA-dependent RNA polymerase catalyzes the transcription of DNA into RNA using the four ribonucleoside triphosphates as substrates. This is DNA-directed RNA polymerase subunit alpha from Alcanivorax borkumensis (strain ATCC 700651 / DSM 11573 / NCIMB 13689 / SK2).